A 338-amino-acid polypeptide reads, in one-letter code: L-lysine 2,3-aminomutase (338 aa).

Residues 107–330 (HKYRNRLLFM…PKLAREIAGE (224 aa)) form the Radical SAM core domain. [4Fe-4S] cluster contacts are provided by C121, C125, and C128. Position 333 is an N6-(pyridoxal phosphate)lysine (K333).

This sequence belongs to the radical SAM superfamily. KamA family. [4Fe-4S] cluster is required as a cofactor. Requires pyridoxal 5'-phosphate as cofactor.

It catalyses the reaction L-lysine = D-beta-lysine. In terms of biological role, with EpmA is involved in the beta-lysylation step of the post-translational modification of translation elongation factor P (EF-P) on 'Lys-34'. EpmB appears to act before EpmA. Displays lysine 2,3-aminomutase activity, producing (R)-beta-lysine from (S)-alpha-lysine (L-lysine). This is L-lysine 2,3-aminomutase (epmB) from Haemophilus influenzae (strain ATCC 51907 / DSM 11121 / KW20 / Rd).